The following is a 433-amino-acid chain: Signal recognition particle 54 kDa protein (433 aa).

Residues 106-113 (GVEGSGKT), 186-190 (DTAGR), and 244-247 (TKMD) each bind GTP.

Belongs to the GTP-binding SRP family. SRP54 subfamily. Part of the signal recognition particle protein translocation system, which is composed of SRP and FtsY. Archaeal SRP consists of a 7S RNA molecule of 300 nucleotides and two protein subunits: SRP54 and SRP19.

The protein resides in the cytoplasm. The enzyme catalyses GTP + H2O = GDP + phosphate + H(+). Involved in targeting and insertion of nascent membrane proteins into the cytoplasmic membrane. Binds to the hydrophobic signal sequence of the ribosome-nascent chain (RNC) as it emerges from the ribosomes. The SRP-RNC complex is then targeted to the cytoplasmic membrane where it interacts with the SRP receptor FtsY. The protein is Signal recognition particle 54 kDa protein of Pyrobaculum islandicum (strain DSM 4184 / JCM 9189 / GEO3).